Consider the following 236-residue polypeptide: Purine nucleoside phosphorylase DeoD-type (236 aa).

His-5 is an a purine D-ribonucleoside binding site. Residues Gly-21, Arg-25, Arg-44, and 88–91 (RVGT) each bind phosphate. A purine D-ribonucleoside-binding positions include 180–182 (EME) and 204–205 (SD). Asp-205 acts as the Proton donor in catalysis.

This sequence belongs to the PNP/UDP phosphorylase family. In terms of assembly, homohexamer; trimer of homodimers.

It catalyses the reaction a purine D-ribonucleoside + phosphate = a purine nucleobase + alpha-D-ribose 1-phosphate. The enzyme catalyses a purine 2'-deoxy-D-ribonucleoside + phosphate = a purine nucleobase + 2-deoxy-alpha-D-ribose 1-phosphate. In terms of biological role, catalyzes the reversible phosphorolytic breakdown of the N-glycosidic bond in the beta-(deoxy)ribonucleoside molecules, with the formation of the corresponding free purine bases and pentose-1-phosphate. This Shewanella frigidimarina (strain NCIMB 400) protein is Purine nucleoside phosphorylase DeoD-type.